A 182-amino-acid chain; its full sequence is Adenine phosphoribosyltransferase (182 aa).

This sequence belongs to the purine/pyrimidine phosphoribosyltransferase family. In terms of assembly, homodimer.

It is found in the cytoplasm. The enzyme catalyses AMP + diphosphate = 5-phospho-alpha-D-ribose 1-diphosphate + adenine. It participates in purine metabolism; AMP biosynthesis via salvage pathway; AMP from adenine: step 1/1. Catalyzes a salvage reaction resulting in the formation of AMP, that is energically less costly than de novo synthesis. This chain is Adenine phosphoribosyltransferase, found in Saccharopolyspora erythraea (strain ATCC 11635 / DSM 40517 / JCM 4748 / NBRC 13426 / NCIMB 8594 / NRRL 2338).